The chain runs to 126 residues: Large ribosomal subunit protein uL22 (126 aa).

This sequence belongs to the universal ribosomal protein uL22 family. As to quaternary structure, part of the 50S ribosomal subunit.

Functionally, this protein binds specifically to 23S rRNA; its binding is stimulated by other ribosomal proteins, e.g. L4, L17, and L20. It is important during the early stages of 50S assembly. It makes multiple contacts with different domains of the 23S rRNA in the assembled 50S subunit and ribosome. In terms of biological role, the globular domain of the protein is located near the polypeptide exit tunnel on the outside of the subunit, while an extended beta-hairpin is found that lines the wall of the exit tunnel in the center of the 70S ribosome. The sequence is that of Large ribosomal subunit protein uL22 from Zymomonas mobilis subsp. mobilis (strain ATCC 31821 / ZM4 / CP4).